Here is a 350-residue protein sequence, read N- to C-terminus: tRNA uridine(34) hydroxylase (350 aa).

Positions 146–240 constitute a Rhodanese domain; the sequence is DDPDALFIDM…YARKAREQGL (95 aa). Residue Cys200 is the Cysteine persulfide intermediate of the active site.

This sequence belongs to the TrhO family.

It catalyses the reaction uridine(34) in tRNA + AH2 + O2 = 5-hydroxyuridine(34) in tRNA + A + H2O. Its function is as follows. Catalyzes oxygen-dependent 5-hydroxyuridine (ho5U) modification at position 34 in tRNAs. This is tRNA uridine(34) hydroxylase from Escherichia fergusonii (strain ATCC 35469 / DSM 13698 / CCUG 18766 / IAM 14443 / JCM 21226 / LMG 7866 / NBRC 102419 / NCTC 12128 / CDC 0568-73).